The chain runs to 1663 residues: Glutamine-rich protein 2 (1663 aa).

Disordered stretches follow at residues His80 to Ala239, Gly423 to Gln481, Ala575 to Leu615, Thr880 to Pro925, and Arg948 to Gln984. Polar residues-rich tracts occupy residues Thr84–Ile103 and Gly131–Pro150. The span at Ser171–Leu182 shows a compositional bias: basic and acidic residues. The span at Gln206 to Val217 shows a compositional bias: low complexity. Residues His958 to Gly975 show a composition bias toward basic and acidic residues. 2 coiled-coil regions span residues Lys1085–Ser1160 and Glu1286–Lys1325. A compositionally biased stretch (basic and acidic residues) spans Thr1609–Ser1619. Residues Thr1609–Arg1663 form a disordered region. Residues Ser1623–Arg1636 show a composition bias toward basic residues. Polar residues predominate over residues Ser1639–Arg1663.

As to quaternary structure, interacts with AKAP3, ODF2 and TSSK4. Interacts with AKAP4. In terms of tissue distribution, expressed in the sperm.

The protein localises to the nucleus membrane. Its subcellular location is the nucleus. It is found in the cytoplasm. It localises to the cell projection. The protein resides in the cilium. The protein localises to the flagellum. Has an essential role in the formation of sperm flagella and flagellar structure maintainance. It acts as a suppressor of ubiquitination and degradation of proteins involved in flagellar development and motility. In Homo sapiens (Human), this protein is Glutamine-rich protein 2 (QRICH2).